Here is a 96-residue protein sequence, read N- to C-terminus: Beta-defensin 20 (96 aa).

The signal sequence occupies residues 1–21 (MKLPQLLLILLFVVLADSVQP). 3 disulfide bridges follow: Cys24-Cys52, Cys32-Cys46, and Cys36-Cys53.

The protein belongs to the beta-defensin family.

The protein localises to the secreted. Has antibacterial activity. The sequence is that of Beta-defensin 20 (Defb20) from Rattus norvegicus (Rat).